The chain runs to 503 residues: ATP synthase subunit alpha (503 aa).

169 to 176 is an ATP binding site; that stretch reads GDRSTGKT.

This sequence belongs to the ATPase alpha/beta chains family. As to quaternary structure, F-type ATPases have 2 components, CF(1) - the catalytic core - and CF(0) - the membrane proton channel. CF(1) has five subunits: alpha(3), beta(3), gamma(1), delta(1), epsilon(1). CF(0) has three main subunits: a(1), b(2) and c(9-12). The alpha and beta chains form an alternating ring which encloses part of the gamma chain. CF(1) is attached to CF(0) by a central stalk formed by the gamma and epsilon chains, while a peripheral stalk is formed by the delta and b chains.

It is found in the cell membrane. It carries out the reaction ATP + H2O + 4 H(+)(in) = ADP + phosphate + 5 H(+)(out). Functionally, produces ATP from ADP in the presence of a proton gradient across the membrane. The alpha chain is a regulatory subunit. This Dehalococcoides mccartyi (strain ATCC BAA-2100 / JCM 16839 / KCTC 5957 / BAV1) protein is ATP synthase subunit alpha.